We begin with the raw amino-acid sequence, 275 residues long: Release factor glutamine methyltransferase (275 aa).

S-adenosyl-L-methionine is bound by residues 114–118 (GTGSG), Asp137, Trp165, and Asn180. Position 180-183 (180-183 (NPPY)) interacts with substrate.

It belongs to the protein N5-glutamine methyltransferase family. PrmC subfamily.

The enzyme catalyses L-glutaminyl-[peptide chain release factor] + S-adenosyl-L-methionine = N(5)-methyl-L-glutaminyl-[peptide chain release factor] + S-adenosyl-L-homocysteine + H(+). Functionally, methylates the class 1 translation termination release factors RF1/PrfA and RF2/PrfB on the glutamine residue of the universally conserved GGQ motif. The protein is Release factor glutamine methyltransferase of Xylella fastidiosa (strain 9a5c).